The sequence spans 2148 residues: Polyketide synthase 1 (2148 aa).

The tract at residues Phe19–His261 is N-terminal acylcarrier protein transacylase domain (SAT). One can recognise a Ketosynthase family 3 (KS3) domain in the interval Glu394–Asp829. Active-site for beta-ketoacyl synthase activity residues include Cys566, His701, and His745. The malonyl-CoA:ACP transacylase (MAT) domain stretch occupies residues Ala929 to Trp1233. Ser1018 acts as the For acyl/malonyl transferase activity in catalysis. Residues Thr1310–Pro1624 are product template (PT) domain. Residues His1314 to Val1447 are N-terminal hotdog fold. The PKS/mFAS DH domain maps to His1314–Asn1619. The active-site Proton acceptor; for dehydratase activity is the His1346. Positions Leu1474 to Asn1619 are C-terminal hotdog fold. The active-site Proton donor; for dehydratase activity is Asp1533. The tract at residues Asn1619–His1655 is disordered. The segment covering Arg1634–Ser1650 has biased composition (low complexity). One can recognise a Carrier 1 domain in the interval Arg1678–Thr1752. Position 1712 is an O-(pantetheine 4'-phosphoryl)serine (Ser1712). Composition is skewed to low complexity over residues Gln1757–Ser1769 and Thr1779–Gly1796. The segment at Gln1757–Gly1796 is disordered. The Carrier 2 domain occupies Ser1793 to His1870. The residue at position 1830 (Ser1830) is an O-(pantetheine 4'-phosphoryl)serine. The segment at Leu1882–Thr2146 is thioesterase (TE) domain. Residue Ser1973 is the For thioesterase activity of the active site.

Functionally, polyketide synthase; part of the Pks1 gene cluster that mediates the biosynthesis of an anthraquinone derivative pigment that contributes to conidial pigmentation that provides protection from UV radiation, heat and cold stress. The polyketide synthase Pks1 produces 1-acetyl-2,4,6,8-tetrahydroxy-9,10-anthraquinone though condensation of acetyl-CoA with malonyl-CoA. The dehydratase EthD and the laccase Mlac1 further convert the anthraquinone derivative into the final conidial pigment. This chain is Polyketide synthase 1, found in Metarhizium anisopliae (strain ARSEF 549).